We begin with the raw amino-acid sequence, 392 residues long: MVDLPTTTPPAQPTTGNDEVDALHPLKPYRSLENEVLQQRIEAVRQELGDELLILGHHYQQDEVIEHTDLRGDSYQLSEMAAKSQACRTIVFCGVHFMAETADILANRPDRIEARDGRRVDVLLPDMAAGCSMADMAAIAQVEAAWADMSEVIDTEQVIPVTYINSAASLKAFCGRHGGIVCTSSNARAVLEWAFERGQRVFFFPDQHLGRNTALTMDITEEQMPVWDPYALEMGGNTDEQIQSSRVILWKGHCSVHQMFRAEHVDRFRKEHPGIKILVHPECPREVNDIADVSGSTGKIIQTIKNSPAGTKWAIGTELHLVNRLKDEHPEQEIHFLSPVVCMCATMYRIDLTHLCWTLENLRDGRLVNQIRVDEETTKWSLIALERMLAVK.

The interval 1–23 (MVDLPTTTPPAQPTTGNDEVDAL) is disordered. The iminosuccinate site is built by H57 and S74. C131 is a [4Fe-4S] cluster binding site. Residues 163-165 (YIN) and S184 contribute to the iminosuccinate site. [4Fe-4S] cluster is bound at residue C254. Iminosuccinate contacts are provided by residues 280 to 282 (HPE) and T297. [4Fe-4S] cluster is bound at residue C344.

It belongs to the quinolinate synthase family. Type 3 subfamily. [4Fe-4S] cluster serves as cofactor.

It localises to the cytoplasm. It carries out the reaction iminosuccinate + dihydroxyacetone phosphate = quinolinate + phosphate + 2 H2O + H(+). It functions in the pathway cofactor biosynthesis; NAD(+) biosynthesis; quinolinate from iminoaspartate: step 1/1. Catalyzes the condensation of iminoaspartate with dihydroxyacetone phosphate to form quinolinate. This Rhodopirellula baltica (strain DSM 10527 / NCIMB 13988 / SH1) protein is Quinolinate synthase.